The primary structure comprises 701 residues: Glycine--tRNA ligase beta subunit (701 aa).

Belongs to the class-II aminoacyl-tRNA synthetase family. As to quaternary structure, tetramer of two alpha and two beta subunits.

The protein resides in the cytoplasm. It carries out the reaction tRNA(Gly) + glycine + ATP = glycyl-tRNA(Gly) + AMP + diphosphate. The sequence is that of Glycine--tRNA ligase beta subunit from Helicobacter pylori (strain HPAG1).